We begin with the raw amino-acid sequence, 863 residues long: DNA mismatch repair protein MutS 2 (863 aa).

Residue 626 to 633 (GPNMSGKS) coordinates ATP.

Belongs to the DNA mismatch repair MutS family.

This protein is involved in the repair of mismatches in DNA. It is possible that it carries out the mismatch recognition step. This protein has a weak ATPase activity. The polypeptide is DNA mismatch repair protein MutS 2 (mutS2) (Halobacterium salinarum (strain ATCC 700922 / JCM 11081 / NRC-1) (Halobacterium halobium)).